Reading from the N-terminus, the 354-residue chain is Glutamine synthetase (354 aa).

The 80-residue stretch at 22-101 (IQAEYVWVDG…VLAETYNSDG (80 aa)) folds into the GS beta-grasp domain. Residues 108 to 354 (FRHHAAKVME…IIVETTLLNA (247 aa)) enclose the GS catalytic domain.

It belongs to the glutamine synthetase family. Homooctamer.

Its subcellular location is the cytoplasm. The catalysed reaction is L-glutamate + NH4(+) + ATP = L-glutamine + ADP + phosphate + H(+). The polypeptide is Glutamine synthetase (GLN1) (Hebeloma cylindrosporum).